Reading from the N-terminus, the 236-residue chain is Ion-translocating oxidoreductase complex subunit E (236 aa).

6 helical membrane passes run 18-38 (ALVQLLGLCPLLAVSSTATNA), 39-59 (LGLGLATTLVLVLTNSAVSAL), 69-89 (IPIYVMIIASVVSAVQMLINA), 92-112 (FGLYQSLGIFIPLIVTNCIVI), 128-148 (ALDGLATGLGATAALFVLGAL), and 182-202 (PFLLAILPPGAFLGLGFMLAF). The segment at 217-236 (RSAVGQALRGAAPTDNHEQA) is disordered.

The protein belongs to the NqrDE/RnfAE family. The complex is composed of six subunits: RnfA, RnfB, RnfC, RnfD, RnfE and RnfG.

The protein resides in the cell inner membrane. Part of a membrane-bound complex that couples electron transfer with translocation of ions across the membrane. The polypeptide is Ion-translocating oxidoreductase complex subunit E (Edwardsiella ictaluri (strain 93-146)).